Here is a 427-residue protein sequence, read N- to C-terminus: Enolase (427 aa).

Glutamine 163 contributes to the (2R)-2-phosphoglycerate binding site. Glutamate 205 acts as the Proton donor in catalysis. Residues aspartate 242, glutamate 285, and aspartate 312 each coordinate Mg(2+). Positions 337, 366, 367, and 388 each coordinate (2R)-2-phosphoglycerate. The active-site Proton acceptor is lysine 337.

Belongs to the enolase family. Requires Mg(2+) as cofactor.

The protein localises to the cytoplasm. Its subcellular location is the secreted. It localises to the cell surface. It carries out the reaction (2R)-2-phosphoglycerate = phosphoenolpyruvate + H2O. The protein operates within carbohydrate degradation; glycolysis; pyruvate from D-glyceraldehyde 3-phosphate: step 4/5. In terms of biological role, catalyzes the reversible conversion of 2-phosphoglycerate (2-PG) into phosphoenolpyruvate (PEP). It is essential for the degradation of carbohydrates via glycolysis. The protein is Enolase of Burkholderia orbicola (strain MC0-3).